The following is a 120-amino-acid chain: Movement protein TGB2 (120 aa).

Over 1 to 16 the chain is Cytoplasmic; it reads MSSTSEPTYQLAPPDS. The chain crosses the membrane as a helical span at residues 17–37; that stretch reads LKQVYLTLAAGFAVGLGIFLL. Topologically, residues 38-76 are lumenal; that stretch reads RTNTLPHTGDNIHHLPHGGCYRDGTKSIRYNSPGVATSS. Residues 77–97 form a helical membrane-spanning segment; the sequence is NIFLPAVAVLCILALLHVPFF. Topologically, residues 98–120 are cytoplasmic; the sequence is QPDRVRRRCCRFYWCADPHHPTV.

It belongs to the Tymovirales TGBp2 protein family.

It localises to the host endoplasmic reticulum membrane. Functionally, plays a role in viral cell-to-cell propagation, by facilitating genome transport to neighboring plant cells through plasmosdesmata,. This Lolium latent virus (isolate Lolium/USA/US1/-) (LoLV) protein is Movement protein TGB2 (ORF3).